A 208-amino-acid polypeptide reads, in one-letter code: Small ribosomal subunit protein eS8 (208 aa).

This sequence belongs to the eukaryotic ribosomal protein eS8 family. Component of the small ribosomal subunit. Identified in a IGF2BP1-dependent mRNP granule complex containing untranslated mRNAs. Part of the small subunit (SSU) processome, composed of more than 70 proteins and the RNA chaperone small nucleolar RNA (snoRNA) U3.

The protein resides in the cytoplasm. Its subcellular location is the membrane. It is found in the nucleus. It localises to the nucleolus. In terms of biological role, component of the small ribosomal subunit. The ribosome is a large ribonucleoprotein complex responsible for the synthesis of proteins in the cell. Part of the small subunit (SSU) processome, first precursor of the small eukaryotic ribosomal subunit. During the assembly of the SSU processome in the nucleolus, many ribosome biogenesis factors, an RNA chaperone and ribosomal proteins associate with the nascent pre-rRNA and work in concert to generate RNA folding, modifications, rearrangements and cleavage as well as targeted degradation of pre-ribosomal RNA by the RNA exosome. In Caenorhabditis elegans, this protein is Small ribosomal subunit protein eS8 (rps-8).